We begin with the raw amino-acid sequence, 138 residues long: MRTLWIVAVCLIGVEGNLYQFGEMINQKTGNFGLLSYVYYGCYCGWGGKGKPQDATDRCCFVHDCCYGRVKGCDPKTATYSYSFENGDIVCGGDDPCLRAVCECDRVAAICFRENMNTYDKKYMLYSIFDCKEESDQC.

Positions Met-1–Gly-16 are cleaved as a signal peptide. 7 disulfide bridges follow: Cys-42/Cys-131, Cys-44/Cys-60, Cys-59/Cys-111, Cys-65/Cys-138, Cys-66/Cys-104, Cys-73/Cys-97, and Cys-91/Cys-102. The Ca(2+) site is built by Tyr-43, Gly-45, and Gly-47. Residue His-63 is part of the active site. Asp-64 serves as a coordination point for Ca(2+). Residue Asp-105 is part of the active site.

The protein belongs to the phospholipase A2 family. Group II subfamily. D49 sub-subfamily. Ca(2+) serves as cofactor. Expressed by the venom gland.

It localises to the secreted. It catalyses the reaction a 1,2-diacyl-sn-glycero-3-phosphocholine + H2O = a 1-acyl-sn-glycero-3-phosphocholine + a fatty acid + H(+). In terms of biological role, exhibits high hydrolytic activities and shows strong preference for the anionic micelles (dPPC with deoxycholate) to the zwitterionic micelles (dPPC with Triton X-100). PLA2 catalyzes the calcium-dependent hydrolysis of the 2-acyl groups in 3-sn-phosphoglycerides. In Daboia siamensis (Eastern Russel's viper), this protein is Acidic phospholipase A2 DsM-a2/DsM-a2'.